Here is a 329-residue protein sequence, read N- to C-terminus: MAQSTTYSRVLGTGSYLPPNRVSNQDLAARLAKQGIETSDEWIVARTGIHARHFAEPDVTTSDLALIASQRAIEAADVDPQAIDLIIVATSTPDFVFPSTACLLQNKLGIKNNGAAFDVQAVCSGFAYAVATADSFIRSGQHRTALVVGAETFSRILDFNDRTTCVLFGDGAGAVVLQASDEPGVLASALHADGSHSNILCTPGNVNGGIVQGSAFLHMDGQAVFKLAVNVLEKVAVEALQKADLQPEQIDWLIPHQANIRIMQSTCRKLGLPQERMVVTVHEHGNTSAASIPLALDVAVRDGRIQRGHNVLIEGVGGGFTWGASVIRY.

Residues Cys-123 and His-256 contribute to the active site. Residues 257–261 (QANIR) are ACP-binding. Asn-286 is a catalytic residue.

This sequence belongs to the thiolase-like superfamily. FabH family. In terms of assembly, homodimer.

The protein resides in the cytoplasm. It carries out the reaction malonyl-[ACP] + acetyl-CoA + H(+) = 3-oxobutanoyl-[ACP] + CO2 + CoA. The protein operates within lipid metabolism; fatty acid biosynthesis. In terms of biological role, catalyzes the condensation reaction of fatty acid synthesis by the addition to an acyl acceptor of two carbons from malonyl-ACP. Catalyzes the first condensation reaction which initiates fatty acid synthesis and may therefore play a role in governing the total rate of fatty acid production. Possesses both acetoacetyl-ACP synthase and acetyl transacylase activities. Its substrate specificity determines the biosynthesis of branched-chain and/or straight-chain of fatty acids. In Paraburkholderia phymatum (strain DSM 17167 / CIP 108236 / LMG 21445 / STM815) (Burkholderia phymatum), this protein is Beta-ketoacyl-[acyl-carrier-protein] synthase III.